A 400-amino-acid polypeptide reads, in one-letter code: Argininosuccinate synthase (400 aa).

Residues 9–17 (AYSGGVDTS) and A37 each bind ATP. Y88 contacts L-citrulline. G118 serves as a coordination point for ATP. T120, N124, and D125 together coordinate L-aspartate. N124 provides a ligand contact to L-citrulline. Residues R128, S176, S185, E261, and Y273 each coordinate L-citrulline.

The protein belongs to the argininosuccinate synthase family. Type 1 subfamily. Homotetramer.

It is found in the cytoplasm. It catalyses the reaction L-citrulline + L-aspartate + ATP = 2-(N(omega)-L-arginino)succinate + AMP + diphosphate + H(+). Its pathway is amino-acid biosynthesis; L-arginine biosynthesis; L-arginine from L-ornithine and carbamoyl phosphate: step 2/3. This chain is Argininosuccinate synthase, found in Prochlorococcus marinus (strain MIT 9211).